The chain runs to 236 residues: Peptidase E (236 aa).

Catalysis depends on charge relay system residues serine 122, aspartate 137, and histidine 159.

Belongs to the peptidase S51 family.

The protein localises to the cytoplasm. It catalyses the reaction Dipeptidase E catalyzes the hydrolysis of dipeptides Asp-|-Xaa. It does not act on peptides with N-terminal Glu, Asn or Gln, nor does it cleave isoaspartyl peptides.. Its function is as follows. Hydrolyzes dipeptides containing N-terminal aspartate residues. May play a role in allowing the cell to use peptide aspartate to spare carbon otherwise required for the synthesis of the aspartate family of amino acids. This chain is Peptidase E, found in Shewanella sp. (strain MR-4).